Consider the following 247-residue polypeptide: Cytochrome c oxidase subunit 2 (247 aa).

The Mitochondrial intermembrane segment spans residues 12–38 (DVPTPWGLYFQDSSTPNQEGIIELHDN). The helical transmembrane segment at 39–59 (IMFYLVLILCTVSWLLFSIVK) threads the bilayer. Residues 60–78 (DSSKNPLPHKYLVHGQTIE) are Mitochondrial matrix-facing. A helical membrane pass occupies residues 79-101 (IIWTILPAVVLLIIAFPSFILLY). At 102 to 247 (LCDEVISPAM…KEFLTWLNEQ (146 aa)) the chain is on the mitochondrial intermembrane side. Residues H182, C217, E219, C221, H225, and M228 each contribute to the Cu cation site. Mg(2+) is bound at residue E219.

This sequence belongs to the cytochrome c oxidase subunit 2 family. In terms of assembly, component of the cytochrome c oxidase (complex IV, CIV), a multisubunit enzyme composed of a catalytic core of 3 subunits and several supernumerary subunits. The complex exists as a monomer or a dimer and forms supercomplexes (SCs) in the inner mitochondrial membrane with ubiquinol-cytochrome c oxidoreductase (cytochrome b-c1 complex, complex III, CIII). Cu cation is required as a cofactor. Post-translationally, the signal sequence of COX2 is processed by IMP1.

The protein resides in the mitochondrion inner membrane. It catalyses the reaction 4 Fe(II)-[cytochrome c] + O2 + 8 H(+)(in) = 4 Fe(III)-[cytochrome c] + 2 H2O + 4 H(+)(out). In terms of biological role, component of the cytochrome c oxidase, the last enzyme in the mitochondrial electron transport chain which drives oxidative phosphorylation. The respiratory chain contains 3 multisubunit complexes succinate dehydrogenase (complex II, CII), ubiquinol-cytochrome c oxidoreductase (cytochrome b-c1 complex, complex III, CIII) and cytochrome c oxidase (complex IV, CIV), that cooperate to transfer electrons derived from NADH and succinate to molecular oxygen, creating an electrochemical gradient over the inner membrane that drives transmembrane transport and the ATP synthase. Cytochrome c oxidase is the component of the respiratory chain that catalyzes the reduction of oxygen to water. Electrons originating from reduced cytochrome c in the intermembrane space (IMS) are transferred via the dinuclear copper A center (CU(A)) of subunit 2 and heme A of subunit 1 to the active site in subunit 1, a binuclear center (BNC) formed by heme A3 and copper B (CU(B)). The BNC reduces molecular oxygen to 2 water molecules using 4 electrons from cytochrome c in the IMS and 4 protons from the mitochondrial matrix. This Cyberlindnera saturnus (Yeast) protein is Cytochrome c oxidase subunit 2 (COX2).